The chain runs to 232 residues: uncharacterized protein (232 aa).

This is an uncharacterized protein from Acanthamoeba polyphaga (Amoeba).